Consider the following 399-residue polypeptide: Dual-specificity RNA methyltransferase RlmN (399 aa).

The Proton acceptor role is filled by glutamate 116. The region spanning 122–352 (SEDRLTLCIS…VLLRRSMGRD (231 aa)) is the Radical SAM core domain. Cysteine 129 and cysteine 357 are joined by a disulfide. Residues cysteine 136, cysteine 140, and cysteine 143 each contribute to the [4Fe-4S] cluster site. Residues 185–186 (GE), serine 217, 238–240 (SLN), and asparagine 314 each bind S-adenosyl-L-methionine. The S-methylcysteine intermediate role is filled by cysteine 357.

This sequence belongs to the radical SAM superfamily. RlmN family. It depends on [4Fe-4S] cluster as a cofactor.

Its subcellular location is the cytoplasm. It catalyses the reaction adenosine(2503) in 23S rRNA + 2 reduced [2Fe-2S]-[ferredoxin] + 2 S-adenosyl-L-methionine = 2-methyladenosine(2503) in 23S rRNA + 5'-deoxyadenosine + L-methionine + 2 oxidized [2Fe-2S]-[ferredoxin] + S-adenosyl-L-homocysteine. It carries out the reaction adenosine(37) in tRNA + 2 reduced [2Fe-2S]-[ferredoxin] + 2 S-adenosyl-L-methionine = 2-methyladenosine(37) in tRNA + 5'-deoxyadenosine + L-methionine + 2 oxidized [2Fe-2S]-[ferredoxin] + S-adenosyl-L-homocysteine. Specifically methylates position 2 of adenine 2503 in 23S rRNA and position 2 of adenine 37 in tRNAs. m2A2503 modification seems to play a crucial role in the proofreading step occurring at the peptidyl transferase center and thus would serve to optimize ribosomal fidelity. This is Dual-specificity RNA methyltransferase RlmN from Bdellovibrio bacteriovorus (strain ATCC 15356 / DSM 50701 / NCIMB 9529 / HD100).